A 782-amino-acid chain; its full sequence is Transcription factor SOX-30 (782 aa).

Disordered regions lie at residues 1–37 (MERARPEPPPPPPPPPRQPPRPTPPRPLRPAPPAQPV), 95–117 (LPPGGPGVPPAPDEGAAAAAAAA), and 139–226 (PPQS…DALK). 2 stretches are compositionally biased toward pro residues: residues 7–35 (EPPPPPPPPPRQPPRPTPPRPLRPAPPAQ) and 97–106 (PGGPGVPPAP). Over residues 203 to 226 (LDGRRSDEKKAKLEAEEAPRDALK) the composition is skewed to basic and acidic residues. Positions 366–434 (VKRPMNAFMV…KHREEFPGWV (69 aa)) form a DNA-binding region, HMG box. Disordered regions lie at residues 501 to 604 (PTPA…STCP), 704 to 724 (YPDEHTHSEDSRSCESMDGPP), and 756 to 782 (ASAPSGVQQVNVTDSDEEEEEKVLRNL). Residues 512-522 (TLFQPSVSSTG) are compositionally biased toward polar residues. The span at 525-538 (AVPPPSLTPRPSLP) shows a compositional bias: pro residues. Polar residues predominate over residues 555 to 574 (SGSSRSVKRSTPGSLESTTR). Residues 704-718 (YPDEHTHSEDSRSCE) show a composition bias toward basic and acidic residues.

As to quaternary structure, interacts with CTNNB1, competitively inhibiting CTNNB1-TCF7L2/TCF4 interaction. In terms of tissue distribution, expressed in the lung (at protein level). Expressed in testes (at protein level). Expressed in preleptotene spermatocytes, round spermatids, and elongated spermatids in the testis (at protein level). Expressed in pachytene spermatocytes during stages 3 to 8 of spermatogenesis (at protein level). Increased expression in diplotene spermatocytes at stage 9-11 and in metaphase spermatocytes or secondary spermatocytes at stage 12. Expressed in ovaries.

It localises to the nucleus. The protein resides in the cytoplasm. In terms of biological role, acts both as a transcriptional activator and a repressor. Binds to the DNA sequence 5'-ACAAT-3' and shows a preference for guanine residues surrounding this core motif. Binds to its own promoter and activates its own transcription. Required to activate the expression of postmeiotic genes involved in spermiogenesis. Binds to the promoter region of CTNNB1 and represses its transcription which leads to inhibition of Wnt signaling. Also inhibits Wnt signaling by binding to the CTNNB1 protein, preventing interaction of CTNNB1 with TCF7L2/TCF4. This is Transcription factor SOX-30 (Sox30) from Mus musculus (Mouse).